Consider the following 463-residue polypeptide: L-seryl-tRNA(Sec) selenium transferase (463 aa).

Lys295 is modified (N6-(pyridoxal phosphate)lysine).

The protein belongs to the SelA family. As to quaternary structure, homodecamer; pentamer of dimers. Binds only one seryl-tRNA(Sec) per dimer. Requires pyridoxal 5'-phosphate as cofactor.

It localises to the cytoplasm. The enzyme catalyses L-seryl-tRNA(Sec) + selenophosphate + H(+) = L-selenocysteinyl-tRNA(Sec) + phosphate. Its pathway is aminoacyl-tRNA biosynthesis; selenocysteinyl-tRNA(Sec) biosynthesis; selenocysteinyl-tRNA(Sec) from L-seryl-tRNA(Sec) (bacterial route): step 1/1. In terms of biological role, converts seryl-tRNA(Sec) to selenocysteinyl-tRNA(Sec) required for selenoprotein biosynthesis. The sequence is that of L-seryl-tRNA(Sec) selenium transferase from Escherichia coli (strain 55989 / EAEC).